Here is a 213-residue protein sequence, read N- to C-terminus: Large ribosomal subunit protein uL4 (213 aa).

The interval Thr-51–Gly-90 is disordered. Positions Gly-63 to Arg-75 are enriched in basic residues.

It belongs to the universal ribosomal protein uL4 family. Part of the 50S ribosomal subunit.

Its function is as follows. One of the primary rRNA binding proteins, this protein initially binds near the 5'-end of the 23S rRNA. It is important during the early stages of 50S assembly. It makes multiple contacts with different domains of the 23S rRNA in the assembled 50S subunit and ribosome. In terms of biological role, forms part of the polypeptide exit tunnel. This Malacoplasma penetrans (strain HF-2) (Mycoplasma penetrans) protein is Large ribosomal subunit protein uL4.